The chain runs to 98 residues: High mobility group nucleosome-binding domain-containing protein 3 (98 aa).

4 stretches are compositionally biased toward basic and acidic residues: residues 1–25 (MPKR…EPTR), 39–52 (PEPK…KEPG), 61–71 (GKKDEKQEAAK), and 80–98 (GENK…DKNE). A disordered region spans residues 1–98 (MPKRKSPEGA…KTESVGDKNE (98 aa)).

It belongs to the HMGN family.

It localises to the nucleus. The sequence is that of High mobility group nucleosome-binding domain-containing protein 3 (HMGN3) from Gallus gallus (Chicken).